We begin with the raw amino-acid sequence, 503 residues long: MMSISLIWGIAVVVSCCIWFIIGIRRRKVGEPPLDNGLIPYLGCALKFGSNPLEFLRAKQRKHGHVFTCKLMGKYVHFITNSLSYHKVLCHGKYFDWKKFHYTTSAKAFGHRSIDPSDGNTTENINKTFNKTLQGDALCSLSEAMMQNLQSVMRPPGLPKSKSAVWVTEGMYAFCYRVMFEAGYLTLFGKDISKTDSQRAFIQNNLDSFKQFDQVFPALVAGVPIHLFKTAHKARERLAESLKHKNLYMRDQVSELIRLRMFLNDTLSTFDDMEKAKTHLVILWASQANTIPATFWSLFQMIRSPEAMKAASEEVNGALQSAGQELSSGGNAIYLDQEQLNNLPVLDSIIKEALRLSSASLNIRTAKEDFTLHLEDGSYNIRKDDIIALYPQLMHLDPEIYPDPLTFKYDRYLDESGKAKTTFYRNGNKLKYFYMPFGSGATICPGRLFAVQEIKQFLILMLSYFELELVESHTKCPPLDQSRAGLGILPPLNDIEFKYKLKH.

The helical transmembrane segment at 4–24 threads the bilayer; it reads ISLIWGIAVVVSCCIWFIIGI. Position 444 (Cys444) interacts with heme.

The protein belongs to the cytochrome P450 family. Requires heme as cofactor.

Its subcellular location is the endoplasmic reticulum membrane. It is found in the microsome membrane. It carries out the reaction cholesterol + reduced [NADPH--hemoprotein reductase] + O2 = 7alpha-hydroxycholesterol + oxidized [NADPH--hemoprotein reductase] + H2O + H(+). It catalyses the reaction 4beta-hydroxycholesterol + reduced [NADPH--hemoprotein reductase] + O2 = 4beta,7alpha-dihydroxycholesterol + oxidized [NADPH--hemoprotein reductase] + H2O + H(+). The enzyme catalyses lathosterol + reduced [NADPH--hemoprotein reductase] + O2 = 7alpha,8alpha-epoxy-5alpha-cholestan-3beta-ol + oxidized [NADPH--hemoprotein reductase] + H2O + H(+). The catalysed reaction is lathosterol + reduced [NADPH--hemoprotein reductase] + O2 = 5alpha-cholestan-7-oxo-3beta-ol + oxidized [NADPH--hemoprotein reductase] + H2O + H(+). It carries out the reaction 7-dehydrocholesterol + reduced [NADPH--hemoprotein reductase] + O2 = 7-oxocholesterol + oxidized [NADPH--hemoprotein reductase] + H2O + H(+). It catalyses the reaction (24S)-hydroxycholesterol + reduced [NADPH--hemoprotein reductase] + O2 = (24S)-7alpha-dihydroxycholesterol + oxidized [NADPH--hemoprotein reductase] + H2O + H(+). The enzyme catalyses (24R)-hydroxycholesterol + reduced [NADPH--hemoprotein reductase] + O2 = (24R)-7alpha-dihydroxycholesterol + oxidized [NADPH--hemoprotein reductase] + H2O + H(+). It functions in the pathway lipid metabolism; bile acid biosynthesis. It participates in steroid metabolism; cholesterol degradation. Its function is as follows. A cytochrome P450 monooxygenase involved in the metabolism of endogenous cholesterol and its oxygenated derivatives (oxysterols). Mechanistically, uses molecular oxygen inserting one oxygen atom into a substrate, and reducing the second into a water molecule, with two electrons provided by NADPH via cytochrome P450 reductase (CPR; NADPH-ferrihemoprotein reductase). Functions as a critical regulatory enzyme of bile acid biosynthesis and cholesterol homeostasis. Catalyzes the hydroxylation of carbon hydrogen bond at 7-alpha position of cholesterol, a rate-limiting step in cholesterol catabolism and bile acid biosynthesis. 7-alpha hydroxylates several oxysterols, including 4beta-hydroxycholesterol and 24-hydroxycholesterol. Catalyzes the oxidation of the 7,8 double bond of 7-dehydrocholesterol and lathosterol with direct and predominant formation of the 7-keto derivatives. This Mus musculus (Mouse) protein is Cytochrome P450 7A1.